We begin with the raw amino-acid sequence, 204 residues long: Imidazole glycerol phosphate synthase subunit HisH (204 aa).

One can recognise a Glutamine amidotransferase type-1 domain in the interval 5–204; that stretch reads KVVIIDTGCA…AKLIQNFLEL (200 aa). Cys80 functions as the Nucleophile in the catalytic mechanism. Catalysis depends on residues His186 and Glu188.

Heterodimer of HisH and HisF.

It is found in the cytoplasm. It carries out the reaction 5-[(5-phospho-1-deoxy-D-ribulos-1-ylimino)methylamino]-1-(5-phospho-beta-D-ribosyl)imidazole-4-carboxamide + L-glutamine = D-erythro-1-(imidazol-4-yl)glycerol 3-phosphate + 5-amino-1-(5-phospho-beta-D-ribosyl)imidazole-4-carboxamide + L-glutamate + H(+). The enzyme catalyses L-glutamine + H2O = L-glutamate + NH4(+). It participates in amino-acid biosynthesis; L-histidine biosynthesis; L-histidine from 5-phospho-alpha-D-ribose 1-diphosphate: step 5/9. Functionally, IGPS catalyzes the conversion of PRFAR and glutamine to IGP, AICAR and glutamate. The HisH subunit catalyzes the hydrolysis of glutamine to glutamate and ammonia as part of the synthesis of IGP and AICAR. The resulting ammonia molecule is channeled to the active site of HisF. The sequence is that of Imidazole glycerol phosphate synthase subunit HisH from Vibrio parahaemolyticus serotype O3:K6 (strain RIMD 2210633).